A 554-amino-acid chain; its full sequence is Membrane protein insertase YidC (554 aa).

A run of 5 helical transmembrane segments spans residues 7-24 (VLWVIFFMSAVMLYDNWQ), 362-382 (FVGNWGWAIVLLTVLIKAVFF), 436-456 (LPVVIQIPVFISLYWVLLASV), 475-495 (PFFILPVLMAVSMFVQTSLNP), and 510-530 (PIAFSVMFFFFPAGLVLYYVV).

This sequence belongs to the OXA1/ALB3/YidC family. Type 1 subfamily. Interacts with the Sec translocase complex via SecD. Specifically interacts with transmembrane segments of nascent integral membrane proteins during membrane integration.

The protein localises to the cell inner membrane. Functionally, required for the insertion and/or proper folding and/or complex formation of integral membrane proteins into the membrane. Involved in integration of membrane proteins that insert both dependently and independently of the Sec translocase complex, as well as at least some lipoproteins. Aids folding of multispanning membrane proteins. This is Membrane protein insertase YidC from Burkholderia ambifaria (strain MC40-6).